Consider the following 263-residue polypeptide: Acyl-[acyl-carrier-protein]--UDP-N-acetylglucosamine O-acyltransferase (263 aa).

Belongs to the transferase hexapeptide repeat family. LpxA subfamily. Homotrimer.

It is found in the cytoplasm. It carries out the reaction a (3R)-hydroxyacyl-[ACP] + UDP-N-acetyl-alpha-D-glucosamine = a UDP-3-O-[(3R)-3-hydroxyacyl]-N-acetyl-alpha-D-glucosamine + holo-[ACP]. Its pathway is glycolipid biosynthesis; lipid IV(A) biosynthesis; lipid IV(A) from (3R)-3-hydroxytetradecanoyl-[acyl-carrier-protein] and UDP-N-acetyl-alpha-D-glucosamine: step 1/6. Functionally, involved in the biosynthesis of lipid A, a phosphorylated glycolipid that anchors the lipopolysaccharide to the outer membrane of the cell. In Campylobacter jejuni subsp. jejuni serotype O:23/36 (strain 81-176), this protein is Acyl-[acyl-carrier-protein]--UDP-N-acetylglucosamine O-acyltransferase.